The primary structure comprises 342 residues: Trace amine-associated receptor 8 (342 aa).

At 1-31 (MTSNFSQPVVQLCYEDVNGSCIETPYSPGSR) the chain is on the extracellular side. N-linked (GlcNAc...) asparagine glycans are attached at residues Asn-4 and Asn-18. 2 cysteine pairs are disulfide-bonded: Cys-21/Cys-185 and Cys-104/Cys-189. A helical membrane pass occupies residues 32–52 (VILYTAFSFGSLLAVFGNLLV). Topologically, residues 53–67 (MTSVLHFKQLHSPTN) are cytoplasmic. A helical membrane pass occupies residues 68–88 (FLIASLACADFLVGVTVMLFS). The Extracellular segment spans residues 89–111 (MVRTVESCWYFGAKFCTLHSCCD). The helical transmembrane segment at 112-132 (VAFCYSSVLHLCFICIDRYIV) threads the bilayer. At 133–146 (VTDPLVYATKFTVS) the chain is on the cytoplasmic side. A helical membrane pass occupies residues 147 to 167 (VSGICISVSWILPLTYSGAVF). The Extracellular portion of the chain corresponds to 168-195 (YTGVNDDGLEELVSALNCVGGCQIIVSQ). The helical transmembrane segment at 196–216 (GWVLIDFLLFFIPTLVMIILY) threads the bilayer. Residues 217-258 (SKIFLIAKQQAIKIETTSSKVESSSESYKIRVAKRERKAAKT) are Cytoplasmic-facing. The chain crosses the membrane as a helical span at residues 259-279 (LGVTVLAFVISWLPYTVDILI). Residue Asp-280 is a topological domain, extracellular. A helical membrane pass occupies residues 281–301 (AFMGFLTPAYIYEICCWSAYY). At 302–342 (NSAMNPLIYALFYPWFRKAIKLILSGDVLKASSSTISLFLE) the chain is on the cytoplasmic side.

It belongs to the G-protein coupled receptor 1 family. Expressed in kidney and amygdala. Not expressed in other tissues or brain regions tested.

It is found in the cell membrane. Functionally, olfactory receptor specific for trace amines. Trace amine compounds are enriched in animal body fluids and act on trace amine-associated receptors (TAARs) to elicit both intraspecific and interspecific innate behaviors. Ligand-binding causes a conformation change that triggers signaling via G alpha proteins, possibly G(i)/G(o) G alpha proteins. The polypeptide is Trace amine-associated receptor 8 (TAAR8) (Homo sapiens (Human)).